Here is a 397-residue protein sequence, read N- to C-terminus: Tryptophan synthase beta chain (397 aa).

Lysine 88 bears the N6-(pyridoxal phosphate)lysine mark.

Belongs to the TrpB family. As to quaternary structure, tetramer of two alpha and two beta chains. It depends on pyridoxal 5'-phosphate as a cofactor.

It carries out the reaction (1S,2R)-1-C-(indol-3-yl)glycerol 3-phosphate + L-serine = D-glyceraldehyde 3-phosphate + L-tryptophan + H2O. It participates in amino-acid biosynthesis; L-tryptophan biosynthesis; L-tryptophan from chorismate: step 5/5. The beta subunit is responsible for the synthesis of L-tryptophan from indole and L-serine. The sequence is that of Tryptophan synthase beta chain from Haemophilus influenzae (strain PittEE).